The following is a 952-amino-acid chain: UvrABC system protein A (952 aa).

38–45 (GLSGSGKS) contacts ATP. The C4-type zinc finger occupies 259 to 286 (CDKCGFSISELEPRLFSFNSPLGSCSYC). ABC transporter domains follow at residues 316–595 (FKNI…SNSI) and 615–944 (GNGK…QYLS). Residue 647 to 654 (GVSGSGKS) participates in ATP binding. A C4-type zinc finger spans residues 746–772 (CDKCFGDGVIRIEMHFLPDVYVKCEVC).

The protein belongs to the ABC transporter superfamily. UvrA family. As to quaternary structure, forms a heterotetramer with UvrB during the search for lesions.

It is found in the cytoplasm. The UvrABC repair system catalyzes the recognition and processing of DNA lesions. UvrA is an ATPase and a DNA-binding protein. A damage recognition complex composed of 2 UvrA and 2 UvrB subunits scans DNA for abnormalities. When the presence of a lesion has been verified by UvrB, the UvrA molecules dissociate. This is UvrABC system protein A from Mycoplasma genitalium (strain ATCC 33530 / DSM 19775 / NCTC 10195 / G37) (Mycoplasmoides genitalium).